The primary structure comprises 185 residues: Large ribosomal subunit protein uL10 (185 aa).

Residues 165 to 185 (LRAKKEEQGGAGTPAPAEAAE) are disordered.

Belongs to the universal ribosomal protein uL10 family. Part of the ribosomal stalk of the 50S ribosomal subunit. The N-terminus interacts with L11 and the large rRNA to form the base of the stalk. The C-terminus forms an elongated spine to which L12 dimers bind in a sequential fashion forming a multimeric L10(L12)X complex.

Its function is as follows. Forms part of the ribosomal stalk, playing a central role in the interaction of the ribosome with GTP-bound translation factors. The chain is Large ribosomal subunit protein uL10 from Streptomyces griseus subsp. griseus (strain JCM 4626 / CBS 651.72 / NBRC 13350 / KCC S-0626 / ISP 5235).